Here is a 194-residue protein sequence, read N- to C-terminus: RNA polymerase II subunit A C-terminal domain phosphatase SSU72 like protein 2 (194 aa).

The protein belongs to the SSU72 phosphatase family.

It is found in the nucleus. The catalysed reaction is O-phospho-L-seryl-[protein] + H2O = L-seryl-[protein] + phosphate. It carries out the reaction O-phospho-L-threonyl-[protein] + H2O = L-threonyl-[protein] + phosphate. In terms of biological role, protein phosphatase that catalyzes the dephosphorylation of the C-terminal domain of RNA polymerase II. Plays a role in RNA processing and termination. The chain is RNA polymerase II subunit A C-terminal domain phosphatase SSU72 like protein 2 from Homo sapiens (Human).